Here is a 340-residue protein sequence, read N- to C-terminus: Glycerol-3-phosphate dehydrogenase [NAD(P)+] (340 aa).

Residues serine 23, tryptophan 24, arginine 43, lysine 44, and lysine 113 each contribute to the NADPH site. Sn-glycerol 3-phosphate contacts are provided by lysine 113, glycine 141, and threonine 143. Alanine 145 serves as a coordination point for NADPH. Residues lysine 196, aspartate 249, serine 259, arginine 260, and asparagine 261 each coordinate sn-glycerol 3-phosphate. The active-site Proton acceptor is the lysine 196. Residue arginine 260 coordinates NADPH. Glutamate 286 is an NADPH binding site.

This sequence belongs to the NAD-dependent glycerol-3-phosphate dehydrogenase family.

The protein resides in the cytoplasm. It catalyses the reaction sn-glycerol 3-phosphate + NAD(+) = dihydroxyacetone phosphate + NADH + H(+). The enzyme catalyses sn-glycerol 3-phosphate + NADP(+) = dihydroxyacetone phosphate + NADPH + H(+). It participates in membrane lipid metabolism; glycerophospholipid metabolism. In terms of biological role, catalyzes the reduction of the glycolytic intermediate dihydroxyacetone phosphate (DHAP) to sn-glycerol 3-phosphate (G3P), the key precursor for phospholipid synthesis. The protein is Glycerol-3-phosphate dehydrogenase [NAD(P)+] of Zymomonas mobilis subsp. mobilis (strain ATCC 31821 / ZM4 / CP4).